The primary structure comprises 83 residues: ATP synthase subunit c, chloroplastic (83 aa).

The next 2 membrane-spanning stretches (helical) occupy residues 3–23 (PLIA…AAIG) and 57–77 (FAFM…LLFA).

This sequence belongs to the ATPase C chain family. As to quaternary structure, F-type ATPases have 2 components, F(1) - the catalytic core - and F(0) - the membrane proton channel. F(1) has five subunits: alpha(3), beta(3), gamma(1), delta(1), epsilon(1). F(0) has four main subunits: a(1), b(1), b'(1) and c(10-14). The alpha and beta chains form an alternating ring which encloses part of the gamma chain. F(1) is attached to F(0) by a central stalk formed by the gamma and epsilon chains, while a peripheral stalk is formed by the delta, b and b' chains.

It is found in the plastid. The protein localises to the chloroplast thylakoid membrane. F(1)F(0) ATP synthase produces ATP from ADP in the presence of a proton or sodium gradient. F-type ATPases consist of two structural domains, F(1) containing the extramembraneous catalytic core and F(0) containing the membrane proton channel, linked together by a central stalk and a peripheral stalk. During catalysis, ATP synthesis in the catalytic domain of F(1) is coupled via a rotary mechanism of the central stalk subunits to proton translocation. Functionally, key component of the F(0) channel; it plays a direct role in translocation across the membrane. A homomeric c-ring of between 10-14 subunits forms the central stalk rotor element with the F(1) delta and epsilon subunits. This Oedogonium cardiacum (Filamentous green alga) protein is ATP synthase subunit c, chloroplastic.